Reading from the N-terminus, the 381-residue chain is E3 ubiquitin-protein ligase ATL15 (381 aa).

The first 23 residues, 1-23 (MVVMSRVSFYSSFLLLLLEVVVA), serve as a signal peptide directing secretion. Residues 40-60 (AIIMIVLVSVFFALGCISVYM) form a helical membrane-spanning segment. An RING-type; atypical zinc finger spans residues 118 to 160 (CPVCLNEFEDDETLRLIPQCCHVFHPGCIDAWLRSQTTCPLCR).

This sequence belongs to the RING-type zinc finger family. ATL subfamily.

It is found in the membrane. It carries out the reaction S-ubiquitinyl-[E2 ubiquitin-conjugating enzyme]-L-cysteine + [acceptor protein]-L-lysine = [E2 ubiquitin-conjugating enzyme]-L-cysteine + N(6)-ubiquitinyl-[acceptor protein]-L-lysine.. It participates in protein modification; protein ubiquitination. E3 ubiquitin-protein ligase able to catalyze polyubiquitination with ubiquitin-conjugating enzyme E2 UBC8, UBC10, UBC11, UBC28 and UBC29 in vitro. This chain is E3 ubiquitin-protein ligase ATL15 (ATL15), found in Arabidopsis thaliana (Mouse-ear cress).